The sequence spans 509 residues: DAP3-binding cell death enhancer 1 (509 aa).

The N-terminal 23 residues, 1–23 (MWRLTGILGRALPRLLGPGFRGI), are a transit peptide targeting the mitochondrion. Disordered regions lie at residues 19–60 (GFRG…RNRD) and 143–185 (VLPS…PGLL). A propeptide spans 24–101 (TPKPTSSDGP…AVLALHLARQ (78 aa)) (extended MTS). The segment covering 26–40 (KPTSSDGPQTTSTTL) has biased composition (polar residues). 2 stretches are compositionally biased toward basic and acidic residues: residues 46 to 60 (NFDRSGSHGSKRNRD) and 156 to 168 (GLREPRLGQEEPA). TPR repeat units follow at residues 213–245 (AGPPGGKNEQDKPKALPLEEAVTSIQQLFQLSV), 246–278 (AIAFNFLGTENIKTGDYTAAFSYFQKAADRGYS), 279–313 (KAQYNVGLCLEHGRGTPRDLSKAVLFYHLAAVQGH), 314–351 (SLAQYRYARCLLQSPGSMSDPERQRAVSLLKQAADSGL), 352–385 (TEAQAFLGVLFTKEPHLDEQKAVKYFWLAASNGD), 386–423 (SQSRFHLGICYEKGLGVQRNLGEAVKCYQKSAAMGNEP), and 470–498 (ASSTGNLGLLCRSGHLGTSHGAPSRAMPS). An SIFI-degron motif is present at residues 307–326 (LAAVQGHSLAQYRYARCLLQ).

Belongs to the DELE1 family. Interacts with DAP3. In terms of assembly, interacts (via TPR repeats) with EIF2AK1/HRI; activating the protein kinase activity of EIF2AK1/HRI, thereby promoting the integrated stress response (ISR). As to quaternary structure, homooctamer; oligomerization is required to activate EIF2AK1/HRI. Interacts (via TPR repeats) with EIF2AK1/HRI; activating the protein kinase activity of EIF2AK1/HRI, thereby promoting the integrated stress response (ISR). Post-translationally, unstable protein in absence of stress: imported in the mitochondrial matrix following processing by the mitochondrial-processing peptidase (MPP), where it is degraded by LONP1. Stabilized in response to iron deficiency: iron deficiency impairs mitochondrial import, promoting localization at the mitochondrial surface and stabilization. Cleaved by OMA1 in response to mitochondrial stress, generating the DAP3-binding cell death enhancer 1 short form (DELE1(S) or S-DELE1) that accumulates in the cytosol and activates the protein kinase activity of EIF2AK1/HRI. Protein cleavage by OMA1 can take place at different positions, and apparently does not require a specific sequence motif. Ubiquitinated and degraded by the SIFI complex once the mitochondrial stress has been resolved, thereby providing stress response silencing. Within the SIFI complex, UBR4 initiates ubiquitin chain that are further elongated or branched by KCMF1.

It localises to the mitochondrion. Its subcellular location is the mitochondrion outer membrane. The protein resides in the mitochondrion inner membrane. The protein localises to the cytoplasm. It is found in the cytosol. Its function is as follows. Protein kinase activator that acts as a key activator of the integrated stress response (ISR) following various stresses, such as iron deficiency, mitochondrial stress or mitochondrial DNA breaks. Detects impaired protein import and processing in mitochondria, activating the ISR. May also required for the induction of death receptor-mediated apoptosis through the regulation of caspase activation. Functionally, protein kinase activator that activates the ISR in response to iron deficiency: iron deficiency impairs mitochondrial import, promoting DELE1 localization at the mitochondrial surface, where it binds and activates EIF2AK1/HRI to trigger the ISR. In terms of biological role, protein kinase activator generated by protein cleavage in response to mitochondrial stress, which accumulates in the cytosol and specifically binds to and activates the protein kinase activity of EIF2AK1/HRI. It thereby activates the integrated stress response (ISR): EIF2AK1/HRI activation promotes eIF-2-alpha (EIF2S1) phosphorylation, leading to a decrease in global protein synthesis and the induction of selected genes, including the transcription factor ATF4, the master transcriptional regulator of the ISR. Also acts as an activator of PRKN-independent mitophagy: activates the protein kinase activity of EIF2AK1/HRI in response to mitochondrial damage, promoting eIF-2-alpha (EIF2S1) phosphorylation, leading to mitochondrial localization of EIF2S1 followed by induction of mitophagy. In Rattus norvegicus (Rat), this protein is DAP3-binding cell death enhancer 1.